Here is a 309-residue protein sequence, read N- to C-terminus: 4-hydroxy-3-methylbut-2-enyl diphosphate reductase (309 aa).

Cys13 contacts [4Fe-4S] cluster. (2E)-4-hydroxy-3-methylbut-2-enyl diphosphate is bound by residues His42 and His75. His42 and His75 together coordinate dimethylallyl diphosphate. The isopentenyl diphosphate site is built by His42 and His75. Cys97 lines the [4Fe-4S] cluster pocket. (2E)-4-hydroxy-3-methylbut-2-enyl diphosphate is bound at residue His125. His125 is a dimethylallyl diphosphate binding site. His125 is a binding site for isopentenyl diphosphate. The Proton donor role is filled by Glu127. Thr165 contacts (2E)-4-hydroxy-3-methylbut-2-enyl diphosphate. A [4Fe-4S] cluster-binding site is contributed by Cys195. Residues Ser223, Ser224, Asn225, and Ser267 each coordinate (2E)-4-hydroxy-3-methylbut-2-enyl diphosphate. Positions 223, 224, 225, and 267 each coordinate dimethylallyl diphosphate. Isopentenyl diphosphate contacts are provided by Ser223, Ser224, Asn225, and Ser267.

This sequence belongs to the IspH family. Requires [4Fe-4S] cluster as cofactor.

The enzyme catalyses isopentenyl diphosphate + 2 oxidized [2Fe-2S]-[ferredoxin] + H2O = (2E)-4-hydroxy-3-methylbut-2-enyl diphosphate + 2 reduced [2Fe-2S]-[ferredoxin] + 2 H(+). The catalysed reaction is dimethylallyl diphosphate + 2 oxidized [2Fe-2S]-[ferredoxin] + H2O = (2E)-4-hydroxy-3-methylbut-2-enyl diphosphate + 2 reduced [2Fe-2S]-[ferredoxin] + 2 H(+). It functions in the pathway isoprenoid biosynthesis; dimethylallyl diphosphate biosynthesis; dimethylallyl diphosphate from (2E)-4-hydroxy-3-methylbutenyl diphosphate: step 1/1. The protein operates within isoprenoid biosynthesis; isopentenyl diphosphate biosynthesis via DXP pathway; isopentenyl diphosphate from 1-deoxy-D-xylulose 5-phosphate: step 6/6. Catalyzes the conversion of 1-hydroxy-2-methyl-2-(E)-butenyl 4-diphosphate (HMBPP) into a mixture of isopentenyl diphosphate (IPP) and dimethylallyl diphosphate (DMAPP). Acts in the terminal step of the DOXP/MEP pathway for isoprenoid precursor biosynthesis. The sequence is that of 4-hydroxy-3-methylbut-2-enyl diphosphate reductase from Chlamydia felis (strain Fe/C-56) (Chlamydophila felis).